Here is a 694-residue protein sequence, read N- to C-terminus: Elongation factor G (694 aa).

A tr-type G domain is found at 9 to 288; the sequence is DAIRNIGIMA…VIVKWLPSPL (280 aa). Residues 18 to 25, 82 to 86, and 136 to 139 each bind GTP; these read AHIDAGKT, DTPGH, and NKMD.

The protein belongs to the TRAFAC class translation factor GTPase superfamily. Classic translation factor GTPase family. EF-G/EF-2 subfamily.

The protein localises to the cytoplasm. Functionally, catalyzes the GTP-dependent ribosomal translocation step during translation elongation. During this step, the ribosome changes from the pre-translocational (PRE) to the post-translocational (POST) state as the newly formed A-site-bound peptidyl-tRNA and P-site-bound deacylated tRNA move to the P and E sites, respectively. Catalyzes the coordinated movement of the two tRNA molecules, the mRNA and conformational changes in the ribosome. The protein is Elongation factor G (fusA) of Chlamydia muridarum (strain MoPn / Nigg).